Consider the following 733-residue polypeptide: Zinc finger transcription factor ace1 (733 aa).

Positions 1–11 (MSFSNPRRRTP) are enriched in basic residues. Disordered regions lie at residues 1 to 22 (MSFS…CEHG), 34 to 63 (GATF…SQSA), and 89 to 183 (ASLS…SSTT). The segment covering 39–49 (SPTSPSASSAA) has biased composition (low complexity). Positions 132 to 142 (LRPRSVRRTRN) are enriched in basic residues. The segment covering 148 to 158 (GIGSSVVSTND) has biased composition (polar residues). Low complexity predominate over residues 171–183 (ASALTRSAASSTT). C2H2-type zinc fingers lie at residues 400-424 (KKCR…EKTH), 428-456 (WKCP…NDKH), and 463-488 (YECL…EKAH). A disordered region spans residues 497-533 (TNGKKAPSQNGSTAQQTPPLANVSTPSSTPSYSVPTP). The span at 503–515 (PSQNGSTAQQTPP) shows a compositional bias: polar residues. Residues 519–530 (VSTPSSTPSYSV) show a composition bias toward low complexity.

The protein localises to the nucleus. Binds to the promoter of the cbh1 gene and activates transcription. This chain is Zinc finger transcription factor ace1 (ace1), found in Hypocrea jecorina (Trichoderma reesei).